Reading from the N-terminus, the 101-residue chain is Small ribosomal subunit protein uS14 (101 aa).

This sequence belongs to the universal ribosomal protein uS14 family. In terms of assembly, part of the 30S ribosomal subunit. Contacts proteins S3 and S10.

Binds 16S rRNA, required for the assembly of 30S particles and may also be responsible for determining the conformation of the 16S rRNA at the A site. The polypeptide is Small ribosomal subunit protein uS14 (Anaplasma phagocytophilum (strain HZ)).